We begin with the raw amino-acid sequence, 384 residues long: 8-amino-7-oxononanoate synthase (384 aa).

Residue Arg-21 participates in substrate binding. 108–109 (GF) is a pyridoxal 5'-phosphate binding site. His-133 is a binding site for substrate. Pyridoxal 5'-phosphate-binding residues include Ser-179, His-207, and Thr-233. Lys-236 carries the N6-(pyridoxal phosphate)lysine modification. Thr-352 serves as a coordination point for substrate.

Belongs to the class-II pyridoxal-phosphate-dependent aminotransferase family. BioF subfamily. As to quaternary structure, homodimer. Pyridoxal 5'-phosphate is required as a cofactor.

It carries out the reaction 6-carboxyhexanoyl-[ACP] + L-alanine + H(+) = (8S)-8-amino-7-oxononanoate + holo-[ACP] + CO2. The protein operates within cofactor biosynthesis; biotin biosynthesis. Catalyzes the decarboxylative condensation of pimeloyl-[acyl-carrier protein] and L-alanine to produce 8-amino-7-oxononanoate (AON), [acyl-carrier protein], and carbon dioxide. The polypeptide is 8-amino-7-oxononanoate synthase (Escherichia fergusonii (strain ATCC 35469 / DSM 13698 / CCUG 18766 / IAM 14443 / JCM 21226 / LMG 7866 / NBRC 102419 / NCTC 12128 / CDC 0568-73)).